Here is a 297-residue protein sequence, read N- to C-terminus: Thiosulfate sulfurtransferase (297 aa).

Lys-14 is modified (N6-acetyllysine; alternate). Lys-14 is modified (N6-succinyllysine; alternate). Residues Val-25 to Ser-143 enclose the Rhodanese 1 domain. Ser-35 carries an O-linked (GlcNAc) serine glycan. Ser-38 is subject to Phosphoserine. An N6-acetyllysine; alternate modification is found at Lys-136. N6-succinyllysine; alternate is present on Lys-136. The interval Glu-144 to Arg-159 is hinge. Lys-163 is subject to N6-acetyllysine. The region spanning Glu-173 to Trp-288 is the Rhodanese 2 domain. Lys-175 is subject to N6-acetyllysine; alternate. Position 175 is an N6-succinyllysine; alternate (Lys-175). Residue Arg-187 participates in substrate binding. An N6-acetyllysine; alternate modification is found at Lys-224. Residue Lys-224 is modified to N6-succinyllysine; alternate. Residue Lys-236 is modified to N6-acetyllysine. N6-acetyllysine; alternate is present on Lys-237. At Lys-237 the chain carries N6-succinyllysine; alternate. Cys-248 serves as the catalytic Cysteine persulfide intermediate. Lys-250 contributes to the substrate binding site.

In terms of assembly, monomer. In terms of tissue distribution, expressed in numerous tissues.

It localises to the mitochondrion matrix. It catalyses the reaction thiosulfate + hydrogen cyanide = thiocyanate + sulfite + 2 H(+). Its function is as follows. Together with MRPL18, acts as a mitochondrial import factor for the cytosolic 5S rRNA. Only the nascent unfolded cytoplasmic form is able to bind to the 5S rRNA. Formation of iron-sulfur complexes and cyanide detoxification. Binds molecular oxygen and sulfur. The polypeptide is Thiosulfate sulfurtransferase (TST) (Bos taurus (Bovine)).